The chain runs to 723 residues: Fatty acid oxidation complex subunit alpha (723 aa).

Positions 1–189 (MIYQAETLQV…KIGLLDAVVD (189 aa)) are enoyl-CoA hydratase/isomerase. Position 296 (D296) interacts with substrate. The interval 311–723 (NKETQRAAVL…FYGAQQQGSI (413 aa)) is 3-hydroxyacyl-CoA dehydrogenase. NAD(+) is bound by residues M325, D344, 401–403 (VVE), K408, and S430. Residue H451 is the For 3-hydroxyacyl-CoA dehydrogenase activity of the active site. N454 contacts NAD(+). Residues N501 and Y661 each coordinate substrate.

This sequence in the N-terminal section; belongs to the enoyl-CoA hydratase/isomerase family. It in the C-terminal section; belongs to the 3-hydroxyacyl-CoA dehydrogenase family. In terms of assembly, heterotetramer of two alpha chains (FadB) and two beta chains (FadA).

The enzyme catalyses a (3S)-3-hydroxyacyl-CoA + NAD(+) = a 3-oxoacyl-CoA + NADH + H(+). It carries out the reaction a (3S)-3-hydroxyacyl-CoA = a (2E)-enoyl-CoA + H2O. It catalyses the reaction a 4-saturated-(3S)-3-hydroxyacyl-CoA = a (3E)-enoyl-CoA + H2O. The catalysed reaction is (3S)-3-hydroxybutanoyl-CoA = (3R)-3-hydroxybutanoyl-CoA. The enzyme catalyses a (3Z)-enoyl-CoA = a 4-saturated (2E)-enoyl-CoA. It carries out the reaction a (3E)-enoyl-CoA = a 4-saturated (2E)-enoyl-CoA. The protein operates within lipid metabolism; fatty acid beta-oxidation. Involved in the aerobic and anaerobic degradation of long-chain fatty acids via beta-oxidation cycle. Catalyzes the formation of 3-oxoacyl-CoA from enoyl-CoA via L-3-hydroxyacyl-CoA. It can also use D-3-hydroxyacyl-CoA and cis-3-enoyl-CoA as substrate. This is Fatty acid oxidation complex subunit alpha from Vibrio vulnificus (strain YJ016).